Here is a 157-residue protein sequence, read N- to C-terminus: UPF0225 protein PMI1492 (157 aa).

The protein belongs to the UPF0225 family.

This Proteus mirabilis (strain HI4320) protein is UPF0225 protein PMI1492.